Here is a 206-residue protein sequence, read N- to C-terminus: LexA repressor (206 aa).

The segment at residues 28–48 is a DNA-binding region (H-T-H motif); the sequence is RAEIARRLGFKSANAAEEHLK. Residues Ser-123 and Lys-160 each act as for autocatalytic cleavage activity in the active site.

Belongs to the peptidase S24 family. In terms of assembly, homodimer.

It catalyses the reaction Hydrolysis of Ala-|-Gly bond in repressor LexA.. Represses a number of genes involved in the response to DNA damage (SOS response), including recA and lexA. In the presence of single-stranded DNA, RecA interacts with LexA causing an autocatalytic cleavage which disrupts the DNA-binding part of LexA, leading to derepression of the SOS regulon and eventually DNA repair. This chain is LexA repressor, found in Shewanella halifaxensis (strain HAW-EB4).